The chain runs to 358 residues: Histidinol-phosphate aminotransferase (358 aa).

K217 carries the post-translational modification N6-(pyridoxal phosphate)lysine.

Belongs to the class-II pyridoxal-phosphate-dependent aminotransferase family. Histidinol-phosphate aminotransferase subfamily. In terms of assembly, homodimer. Pyridoxal 5'-phosphate is required as a cofactor.

It carries out the reaction L-histidinol phosphate + 2-oxoglutarate = 3-(imidazol-4-yl)-2-oxopropyl phosphate + L-glutamate. Its pathway is amino-acid biosynthesis; L-histidine biosynthesis; L-histidine from 5-phospho-alpha-D-ribose 1-diphosphate: step 7/9. The polypeptide is Histidinol-phosphate aminotransferase (Ruminiclostridium cellulolyticum (strain ATCC 35319 / DSM 5812 / JCM 6584 / H10) (Clostridium cellulolyticum)).